A 347-amino-acid chain; its full sequence is Galactoside alpha-(1,2)-fucosyltransferase 2 (347 aa).

Residues 1-5 lie on the Cytoplasmic side of the membrane; the sequence is MASAQ. The chain crosses the membrane as a helical; Signal-anchor for type II membrane protein span at residues 6–26; it reads VPFSFPLAHFLIFVFVTSTII. Topologically, residues 27 to 347 are lumenal; the sequence is HLQQRIVKLQ…PADLSPLLKH (321 aa). Residues asparagine 192, asparagine 258, asparagine 286, and asparagine 312 are each glycosylated (N-linked (GlcNAc...) asparagine).

Belongs to the glycosyltransferase 11 family. In terms of tissue distribution, expressed in stomach, colon, ovary and uterus, specifically in luminal uterine epithelium. Expressed in various tissues including heart, liver, kidney, testis, epididymis, small intestine,and cecum. Expressed in duodenum, jejunum and ileum.

The protein resides in the golgi apparatus. It localises to the golgi stack membrane. It carries out the reaction a beta-D-galactosyl-(1-&gt;3)-N-acetyl-beta-D-glucosaminyl derivative + GDP-beta-L-fucose = an alpha-L-Fuc-(1-&gt;2)-beta-D-Gal-(1-&gt;3)-beta-D-GlcNAc derivative + GDP + H(+). It catalyses the reaction a beta-D-galactosyl-(1-&gt;4)-N-acetyl-beta-D-glucosaminyl derivative + GDP-beta-L-fucose = an alpha-L-Fuc-(1-&gt;2)-beta-D-Gal-(1-&gt;4)-beta-D-GlcNAc derivative + GDP + H(+). The enzyme catalyses a neolactoside nLc4Cer + GDP-beta-L-fucose = a neolactoside IV(2)-alpha-Fuc-nLc4Cer + GDP + H(+). The catalysed reaction is a neolactoside nLc4Cer(d18:1(4E)) + GDP-beta-L-fucose = a neolactoside IV(2)-alpha-Fuc-nLc4Cer(d18:1(4E)) + GDP + H(+). It carries out the reaction a ganglioside GM1 + GDP-beta-L-fucose = a ganglioside Fuc-GM1 + GDP + H(+). It catalyses the reaction a ganglioside GA1 + GDP-beta-L-fucose = a ganglioside Fuc-GA1 + GDP + H(+). The enzyme catalyses Lc4Cer + GDP-beta-L-fucose = alpha-L-fucosyl-(1-&gt;2)-beta-D-galactosyl-(1-&gt;3)-N-acetyl-beta-D-glucosaminyl-(1-&gt;3)-beta-D-galactosyl-(1-&gt;4)-beta-D-glucosyl-(1&lt;-&gt;1')-ceramide + GDP + H(+). The catalysed reaction is a beta-D-Gal-(1-&gt;3)-beta-D-GlcNAc-(1-&gt;3)-beta-D-Gal-(1-&gt;4)-beta-D-Glc-(1&lt;-&gt;1')-Cer(d18:1(4E)) + GDP-beta-L-fucose = alpha-L-fucosyl-(1-&gt;2)- beta-D-galactosyl-(1-&gt;3)-N-acetyl-beta-D-glucosaminyl-(1-&gt;3)-beta-D-galactosyl-(1-&gt;4)-beta-D-glucosyl-(1&lt;-&gt;1')-N-acylsphing-4-enine + GDP + H(+). It carries out the reaction a ganglioside GD1b + GDP-beta-L-fucose = a ganglioside Fuc-GD1b + GDP + H(+). It catalyses the reaction a ganglioside GM1 (d18:1(4E)) + GDP-beta-L-fucose = a ganglioside Fuc-GM1 (d18:1(4E)) + GDP + H(+). The enzyme catalyses a globoside GalGb4Cer (d18:1(4E)) + GDP-beta-L-fucose = a globoside Globo-H (d18:1(4E)) + GDP + H(+). The catalysed reaction is a lactoside III(4)-a-Fuc-Lc4Cer + GDP-beta-L-fucose = a lactoside IV(2),III(4)-a-[Fuc]2-Lc4Cer + GDP + H(+). It carries out the reaction beta-D-galactosyl-(1-&gt;3)-N-acetyl-D-galactosamine + GDP-beta-L-fucose = alpha-L-fucosyl-(1-&gt;2)-beta-D-galactosyl-(1-&gt;3)-N-acetyl-D-galactosamine + GDP + H(+). The protein operates within protein modification; protein glycosylation. In terms of biological role, catalyzes the transfer of L-fucose, from a guanosine diphosphate-beta-L-fucose, to the terminal galactose on both O- and N-linked glycans chains of cell surface glycoproteins and glycolipids and the resulting epitope regulates several processes such as cell-cell interaction including host-microbe interaction, cell surface expression and cell proliferation. Preferentially fucosylates gangliosides GA1 and GM1 in the antrum, cecum and colon and in the female reproductive organs. Fucosylated host glycoproteins or glycolipids mediate interaction with intestinal microbiota influencing its composition. Creates a soluble precursor oligosaccharide FuC-alpha ((1,2)Galbeta-) called the H antigen which is an essential substrate for the final step in the soluble ABO blood group antigen synthesis pathway. The polypeptide is Galactoside alpha-(1,2)-fucosyltransferase 2 (Mus musculus (Mouse)).